Here is a 441-residue protein sequence, read N- to C-terminus: MSEMTPREIVHELDSHIIGQHNAKRSVAIALRNRWRRMQLDADFRQEVTPKNILMIGPTGVGKTEIARRLAKLARAPFIKVEATKFTEVGYVGKEVEQIIRDLTDSAIKLTREEQMKKCKFRAEEAAEERILDALLPKAKEDWDNEKPDDSATRQVFRKKLREGQLDDKEIEIDVSAPQVGIEIMSPPGMEEMTNQLQSMFQNMGLGASKRRKMPIKEAYKLMVEEEAAKLVNQDDLKEQAIELVEQHGIVFLDEIDKICKRGEASGPDVSREGVQRDLLPLVEGCTVNTKHGMVKTDHILFIASGAFQMSKPSDLIPELQGRLPIRVELDALSADDFKRILTEPHASLTEQQIALMGTEGVKIEFTEDGIESIAQAAWQVNERTENIGARRLHTVMEKLTEELSYEASDKSGSTIVIDAKYVSDHLDNLVQDEDLSRFIL.

Residues Ile18, 60-65 (GVGKTE), Asp254, Glu319, and Arg391 each bind ATP.

This sequence belongs to the ClpX chaperone family. HslU subfamily. A double ring-shaped homohexamer of HslV is capped on each side by a ring-shaped HslU homohexamer. The assembly of the HslU/HslV complex is dependent on binding of ATP.

The protein localises to the cytoplasm. Its function is as follows. ATPase subunit of a proteasome-like degradation complex; this subunit has chaperone activity. The binding of ATP and its subsequent hydrolysis by HslU are essential for unfolding of protein substrates subsequently hydrolyzed by HslV. HslU recognizes the N-terminal part of its protein substrates and unfolds these before they are guided to HslV for hydrolysis. The polypeptide is ATP-dependent protease ATPase subunit HslU (Shewanella woodyi (strain ATCC 51908 / MS32)).